The chain runs to 213 residues: Urease accessory protein UreG (213 aa).

14–21 contacts GTP; the sequence is GPVGSGKT.

This sequence belongs to the SIMIBI class G3E GTPase family. UreG subfamily. In terms of assembly, homodimer. UreD, UreF and UreG form a complex that acts as a GTP-hydrolysis-dependent molecular chaperone, activating the urease apoprotein by helping to assemble the nickel containing metallocenter of UreC. The UreE protein probably delivers the nickel.

The protein resides in the cytoplasm. Functionally, facilitates the functional incorporation of the urease nickel metallocenter. This process requires GTP hydrolysis, probably effectuated by UreG. The protein is Urease accessory protein UreG of Mesorhizobium japonicum (strain LMG 29417 / CECT 9101 / MAFF 303099) (Mesorhizobium loti (strain MAFF 303099)).